A 197-amino-acid polypeptide reads, in one-letter code: DNA helicase/primase complex protein (197 aa).

Belongs to the herpesviridae UL52 family.

Involved in DNA replication. The chain is DNA helicase/primase complex protein (7) from Equus caballus (Horse).